A 182-amino-acid polypeptide reads, in one-letter code: Large ribosomal subunit protein uL16 (182 aa).

Belongs to the universal ribosomal protein uL16 family.

The polypeptide is Large ribosomal subunit protein uL16 (Thermococcus onnurineus (strain NA1)).